Reading from the N-terminus, the 218-residue chain is Small ribosomal subunit protein uS3 (218 aa).

Residues 38 to 106 (IREYISKRLQ…RVHINIVEIK (69 aa)) form the KH type-2 domain.

It belongs to the universal ribosomal protein uS3 family. In terms of assembly, part of the 30S ribosomal subunit. Forms a tight complex with proteins S10 and S14.

Functionally, binds the lower part of the 30S subunit head. Binds mRNA in the 70S ribosome, positioning it for translation. The sequence is that of Small ribosomal subunit protein uS3 from Geobacillus kaustophilus (strain HTA426).